The primary structure comprises 676 residues: DNA-directed RNA polymerase subunit beta' (676 aa).

Positions 69, 71, 87, and 90 each coordinate Zn(2+). Positions 489, 491, and 493 each coordinate Mg(2+).

This sequence belongs to the RNA polymerase beta' chain family. RpoC1 subfamily. As to quaternary structure, in plastids the minimal PEP RNA polymerase catalytic core is composed of four subunits: alpha, beta, beta', and beta''. When a (nuclear-encoded) sigma factor is associated with the core the holoenzyme is formed, which can initiate transcription. Mg(2+) is required as a cofactor. The cofactor is Zn(2+).

The protein localises to the plastid. Its subcellular location is the chloroplast. It carries out the reaction RNA(n) + a ribonucleoside 5'-triphosphate = RNA(n+1) + diphosphate. In terms of biological role, DNA-dependent RNA polymerase catalyzes the transcription of DNA into RNA using the four ribonucleoside triphosphates as substrates. This chain is DNA-directed RNA polymerase subunit beta', found in Lolium perenne (Perennial ryegrass).